The chain runs to 423 residues: MQYEDENGVNEPSRRRLLKGIGALALAGSCPVAHAQKTQSAPGTLSPDARNEKQPFYGEHQAGILTPQQAAMMLVAFDVLASDKADLERLFRLLTQRFAFLTQGGAAPETPNPRLPPLDSGILGGYIAPDNLTITLSVGHSLFDERFGLAPQMPKKLQKMTRFPNDSLDAALCHGDVLLQICANTQDTVIHALRDIIKHTPDLLSVRWKREGFISDHAARSKGKETPINLLGFKDGTANPDSQNAKLMQKVVWVTADQQEPAWTIGGSYQAVRLIQFRVEFWDRTPLKEQQTIFGRDKQTGAPLGMLHEHDVPDYASDPEGKVIALDSHIRLANPRTAESESSLMLRRGYSYSLGVTNSGQLDMGLLFVCYQHDLEKGFLTVQKRLNGEALEEYVKPIGGGYFFALPGVKDANDYLGSALLRV.

Positions 1-35 form a signal peptide, tat-type signal; that stretch reads MQYEDENGVNEPSRRRLLKGIGALALAGSCPVAHA. Heme b-binding positions include 236-238, H329, 334-336, and R347; these read GTA and NPR.

This sequence belongs to the DyP-type peroxidase family. EfeB subfamily. In terms of assembly, homodimer. Part of a ferrous iron transporter composed of EfeU, EfeO and EfeB. Requires heme b as cofactor. Post-translationally, predicted to be exported by the Tat system. The position of the signal peptide cleavage has not been experimentally proven.

The protein localises to the periplasm. The catalysed reaction is heme b + 2 H(+) = protoporphyrin IX + Fe(2+). In terms of biological role, involved in the recovery of exogenous heme iron. Extracts iron from heme while preserving the protoporphyrin ring intact. In Escherichia coli O6:K15:H31 (strain 536 / UPEC), this protein is Deferrochelatase (efeB).